The sequence spans 73 residues: Putative membrane protein insertion efficiency factor (73 aa).

This sequence belongs to the UPF0161 family.

It localises to the cell inner membrane. Functionally, could be involved in insertion of integral membrane proteins into the membrane. The chain is Putative membrane protein insertion efficiency factor from Dinoroseobacter shibae (strain DSM 16493 / NCIMB 14021 / DFL 12).